We begin with the raw amino-acid sequence, 710 residues long: Fatty acid oxidation complex subunit alpha (710 aa).

The interval 1 to 190 (MSMEKTFNLA…KMGLVNDVVP (190 aa)) is enoyl-CoA hydratase. The tract at residues 310–710 (RKVKKVMVLG…ASDGSQFYKK (401 aa)) is 3-hydroxyacyl-CoA dehydrogenase.

The protein in the N-terminal section; belongs to the enoyl-CoA hydratase/isomerase family. In the central section; belongs to the 3-hydroxyacyl-CoA dehydrogenase family. In terms of assembly, heterotetramer of two alpha chains (FadJ) and two beta chains (FadI).

It is found in the cytoplasm. It catalyses the reaction a (3S)-3-hydroxyacyl-CoA = a (2E)-enoyl-CoA + H2O. The catalysed reaction is a 4-saturated-(3S)-3-hydroxyacyl-CoA = a (3E)-enoyl-CoA + H2O. It carries out the reaction a (3S)-3-hydroxyacyl-CoA + NAD(+) = a 3-oxoacyl-CoA + NADH + H(+). The enzyme catalyses (3S)-3-hydroxybutanoyl-CoA = (3R)-3-hydroxybutanoyl-CoA. The protein operates within lipid metabolism; fatty acid beta-oxidation. In terms of biological role, catalyzes the formation of a hydroxyacyl-CoA by addition of water on enoyl-CoA. Also exhibits 3-hydroxyacyl-CoA epimerase and 3-hydroxyacyl-CoA dehydrogenase activities. In Shewanella frigidimarina (strain NCIMB 400), this protein is Fatty acid oxidation complex subunit alpha.